Reading from the N-terminus, the 162-residue chain is 3-dehydroquinate dehydratase (162 aa).

Tyr-22 serves as the catalytic Proton acceptor. Residues Asn-73, His-79, and Asp-86 each coordinate substrate. His-99 functions as the Proton donor in the catalytic mechanism. Residues 100 to 101 and Arg-110 contribute to the substrate site; that span reads LS.

The protein belongs to the type-II 3-dehydroquinase family. Homododecamer.

The catalysed reaction is 3-dehydroquinate = 3-dehydroshikimate + H2O. The protein operates within metabolic intermediate biosynthesis; chorismate biosynthesis; chorismate from D-erythrose 4-phosphate and phosphoenolpyruvate: step 3/7. In terms of biological role, catalyzes a trans-dehydration via an enolate intermediate. The chain is 3-dehydroquinate dehydratase from Sulfurovum sp. (strain NBC37-1).